A 375-amino-acid polypeptide reads, in one-letter code: Succinyl-diaminopimelate desuccinylase (375 aa).

His-66 is a Zn(2+) binding site. Residue Asp-68 is part of the active site. A Zn(2+)-binding site is contributed by Asp-99. Glu-133 serves as the catalytic Proton acceptor. Zn(2+) contacts are provided by Glu-134, Glu-162, and His-348.

Belongs to the peptidase M20A family. DapE subfamily. In terms of assembly, homodimer. Zn(2+) serves as cofactor. The cofactor is Co(2+).

It carries out the reaction N-succinyl-(2S,6S)-2,6-diaminopimelate + H2O = (2S,6S)-2,6-diaminopimelate + succinate. The protein operates within amino-acid biosynthesis; L-lysine biosynthesis via DAP pathway; LL-2,6-diaminopimelate from (S)-tetrahydrodipicolinate (succinylase route): step 3/3. Its function is as follows. Catalyzes the hydrolysis of N-succinyl-L,L-diaminopimelic acid (SDAP), forming succinate and LL-2,6-diaminopimelate (DAP), an intermediate involved in the bacterial biosynthesis of lysine and meso-diaminopimelic acid, an essential component of bacterial cell walls. This is Succinyl-diaminopimelate desuccinylase from Erwinia tasmaniensis (strain DSM 17950 / CFBP 7177 / CIP 109463 / NCPPB 4357 / Et1/99).